The primary structure comprises 216 residues: Histidine biosynthesis bifunctional protein HisIE (216 aa).

The segment at 1–132 (MENILKELKF…KVYEAENAKI (132 aa)) is phosphoribosyl-AMP cyclohydrolase. The interval 133-216 (LQEIYDVIVD…IKLEDIYEEA (84 aa)) is phosphoribosyl-ATP pyrophosphohydrolase.

This sequence in the N-terminal section; belongs to the PRA-CH family. The protein in the C-terminal section; belongs to the PRA-PH family.

The protein resides in the cytoplasm. The enzyme catalyses 1-(5-phospho-beta-D-ribosyl)-ATP + H2O = 1-(5-phospho-beta-D-ribosyl)-5'-AMP + diphosphate + H(+). It carries out the reaction 1-(5-phospho-beta-D-ribosyl)-5'-AMP + H2O = 1-(5-phospho-beta-D-ribosyl)-5-[(5-phospho-beta-D-ribosylamino)methylideneamino]imidazole-4-carboxamide. It functions in the pathway amino-acid biosynthesis; L-histidine biosynthesis; L-histidine from 5-phospho-alpha-D-ribose 1-diphosphate: step 2/9. It participates in amino-acid biosynthesis; L-histidine biosynthesis; L-histidine from 5-phospho-alpha-D-ribose 1-diphosphate: step 3/9. The chain is Histidine biosynthesis bifunctional protein HisIE (hisI) from Thermoanaerobacter pseudethanolicus (strain ATCC 33223 / 39E) (Clostridium thermohydrosulfuricum).